The following is a 447-amino-acid chain: MKRIKRILAVLTIFALLATINAFTFVSLAQTNTIEIIIGNVKARPGDRIEVPVSLKNVPDKGIVSSDFVIEYDSKLFKVIELKAGDIVENPSESFSYNVVEKDEIIAVLYLEETGLGIEAIRTDGVFFTIVMEVSKDVKPGISPIKFESFGATADNDMNEMTPKLVEGKVEIIEASAPEATPTPGSTAGSGAGGGTGSSGSGQPSATPTPTATEKPSTTPKTTEQPHEDIPQSGGTGEHAPFLKGYPGGLFKPENNITRAEAAVIFAKLLGADENSAGKNSSITFKDLKDSHWAAWAIKYVTEQNLFGGYPDGTFMPDKSITRAEFATVTYKFLEKLGKIEQGTDVKTQLKDIEGHWAQKYIETLVAKGYIKGYPDETFRPQASIKRAESVALINRSLERGPLNGAVLEFTDVPVNYWAYKDIAEGVIYHSYKIDENGQEVMVEKLD.

Positions 1–29 are cleaved as a signal peptide; sequence MKRIKRILAVLTIFALLATINAFTFVSLA. The region spanning 30–180 is the Cohesin domain; sequence QTNTIEIIIG…EIIEASAPEA (151 aa). The tract at residues 30–180 is receptor binding site for duplicated segment of CipA; sequence QTNTIEIIIG…EIIEASAPEA (151 aa). The interval 177–247 is disordered; that stretch reads APEATPTPGS…EHAPFLKGYP (71 aa). Residues 188–200 show a composition bias toward gly residues; that stretch reads AGSGAGGGTGSSG. Over residues 201 to 223 the composition is skewed to low complexity; the sequence is SGQPSATPTPTATEKPSTTPKTT. SLH domains lie at 216-280, 281-344, and 345-408; these read PSTT…AGKN, SSIT…EQGT, and DVKT…GAVL. The SLH 4; truncated domain maps to 409–429; the sequence is EFTDVPVNYWAYKDIAEGVIY.

Its subcellular location is the secreted. The protein localises to the cell wall. The protein resides in the S-layer. In terms of biological role, anchors the cellulosome to the cell surface by binding the duplicated segment that is present at the C-terminal end of CipA. The sequence is that of Cellulosome-anchoring protein (ancA) from Acetivibrio thermocellus (strain ATCC 27405 / DSM 1237 / JCM 9322 / NBRC 103400 / NCIMB 10682 / NRRL B-4536 / VPI 7372) (Clostridium thermocellum).